The sequence spans 599 residues: Afamin (599 aa).

The signal sequence occupies residues 1-21 (MKLLKLTGFIFFLFFLTESLT). Albumin domains are found at residues 22 to 210 (LPTQ…IPVT), 211 to 403 (QYLK…KFNE), and 404 to 599 (TTEK…KIGN). An N-linked (GlcNAc...) (complex) asparagine glycan is attached at N33. 11 disulfides stabilise this stretch: C77-C86, C99-C114, C113-C124, C148-C193, C192-C201, C224-C270, C269-C277, C289-C303, C302-C313, C340-C385, and C384-C393. N109 is a glycosylation site (N-linked (GlcNAc...) (complex) asparagine). A binding pocket for hydrophobic ligands region spans residues 215–319 (AFSSYQKHVC…RGQCIINSNK (105 aa)). N383 carries N-linked (GlcNAc...) (complex) asparagine; atypical glycosylation. N402 carries an N-linked (GlcNAc...) (complex) asparagine glycan. Cystine bridges form between C416/C462, C461/C470, C483/C499, C498/C509, C536/C581, and C580/C589. The N-linked (GlcNAc...) asparagine glycan is linked to N488.

It belongs to the ALB/AFP/VDB family. As to quaternary structure, forms a 1:1 complex with Wnt family members; interacts with WNT1, WNT2B, WNT3, WNT3A, WNT5A, WNT7A, WNT7B, WNT8, WNT9A, WNT9B, WNT10A and WNT10B. N-glycosylated; more than 90% of the glycans are sialylated. In terms of tissue distribution, high level detected in plasma but also in extravascular fluids such as follicular and cerebrospinal fluids (at protein level).

Its subcellular location is the secreted. In terms of biological role, functions as a carrier for hydrophobic molecules in body fluids. Essential for the solubility and activity of lipidated Wnt family members, including WNT1, WNT2B, WNT3, WNT3A, WNT5A, WNT7A, WNT7B, WNT8, WNT9A, WNT9B, WNT10A and WNT10B. Binds vitamin E. May transport vitamin E in body fluids under conditions where the lipoprotein system is not sufficient. May be involved in the transport of vitamin E across the blood-brain barrier. In Homo sapiens (Human), this protein is Afamin (AFM).